Consider the following 481-residue polypeptide: 7-deoxyloganetin glucosyltransferase (481 aa).

His-22 acts as the Proton acceptor in catalysis. An anthocyanidin is bound at residue His-22. The active-site Charge relay is the Asp-126. 7 residues coordinate UDP-alpha-D-glucose: Thr-148, Gln-363, His-378, Trp-381, Asn-382, Ser-383, and Glu-386. An anthocyanidin is bound at residue Ala-401. UDP-alpha-D-glucose-binding residues include Glu-402 and Gln-403.

Belongs to the UDP-glycosyltransferase family. As to expression, ubiquitous. Very low expression in stems.

It catalyses the reaction 7-deoxyloganetin + UDP-alpha-D-glucose = 7-deoxyloganin + UDP + H(+). Functionally, iridoid glucosyltransferase acting on genipin and 7-deoxyloganetin. No activity with 7-deoxyloganetic acid. Involved in geniposide biosynthesis. This is 7-deoxyloganetin glucosyltransferase (UGT85A24) from Gardenia jasminoides (Cape jasmine).